The sequence spans 190 residues: Flavodoxin-like domain-containing protein BilS (190 aa).

Its pathway is porphyrin-containing compound metabolism; protoheme degradation. In terms of biological role, together with BilR, catalyzes reduction of mesobilirubin and/or bilirubin to urobilinogen, a key step during heme degradation. BilS is probably involved in electron transfer for the bilirubin reductase BilR. In Clostridium symbiosum (strain WAL-14163), this protein is Flavodoxin-like domain-containing protein BilS.